A 519-amino-acid polypeptide reads, in one-letter code: MHQQVIIFDTTLRDGEQSLQTSLSVKEKLQIAFALEKLGVDVMEVGFPISSPGDFESVHTIAQNIQNSCVCGLARCLEKDIDIAAEALKSAKKFRIHIFLPTSAIHIQSKLRKNFDQIIDMTTHSIRYARKYTDDVEFSCEDAGRTSIDNLCRIVEIAIKSGARTINIPDTVGYTIPNQFSEIIYSLYKKVPIIDQAIISVHCHDDLGMAVGNSISAIQAGARQIEGTINGIGERAGNTALEEIIMAIKIRHDLLHVYTNIHHHEIYQTSQVVSQLCNMPIPANKAIVGSNAFSHSSGIHQDGVLKNKKNYEIMNPKNIGLKKVQLNLTSRSGRAAVKYHMEKMGYQEHDYNIDELYKVFLKLADQKGRVFNYELEALAFTKYSQEYLEYFALESFHIHSTSSALSNAIINLYCGKEKKIHSCSTTGRGPIDAAYKALTLISKLPIKLEKYQLHSKKYEYNILGQVNIIVSYQGRHFHGIGSNIDIIKASIIAMIQALNNIWQTKQITINHKNTQHIKK.

Positions V5–Y267 constitute a Pyruvate carboxyltransferase domain. The Mn(2+) site is built by D14, H202, H204, and N238. A regulatory domain region spans residues A392–K519.

The protein belongs to the alpha-IPM synthase/homocitrate synthase family. LeuA type 1 subfamily. As to quaternary structure, homodimer. Mn(2+) serves as cofactor.

It is found in the cytoplasm. It catalyses the reaction 3-methyl-2-oxobutanoate + acetyl-CoA + H2O = (2S)-2-isopropylmalate + CoA + H(+). It functions in the pathway amino-acid biosynthesis; L-leucine biosynthesis; L-leucine from 3-methyl-2-oxobutanoate: step 1/4. Its function is as follows. Catalyzes the condensation of the acetyl group of acetyl-CoA with 3-methyl-2-oxobutanoate (2-ketoisovalerate) to form 3-carboxy-3-hydroxy-4-methylpentanoate (2-isopropylmalate). The sequence is that of 2-isopropylmalate synthase from Blochmanniella floridana.